The following is a 177-amino-acid chain: Large ribosomal subunit protein uL6 (177 aa).

The protein belongs to the universal ribosomal protein uL6 family. In terms of assembly, part of the 50S ribosomal subunit.

In terms of biological role, this protein binds to the 23S rRNA, and is important in its secondary structure. It is located near the subunit interface in the base of the L7/L12 stalk, and near the tRNA binding site of the peptidyltransferase center. The chain is Large ribosomal subunit protein uL6 from Rickettsia typhi (strain ATCC VR-144 / Wilmington).